The following is a 280-amino-acid chain: Small ribosomal subunit protein uS3 (280 aa).

The KH type-2 domain maps to 38-106 (IRRLLSTGLE…QVQLNILEVR (69 aa)). The disordered stretch occupies residues 215–280 (AAAAPAGAER…PAAEPQSTES (66 aa)). Low complexity predominate over residues 238–280 (SGASGTTATGTEAGRAAASADESTAAGQPAEAAPAAEPQSTES).

It belongs to the universal ribosomal protein uS3 family. As to quaternary structure, part of the 30S ribosomal subunit. Forms a tight complex with proteins S10 and S14.

Its function is as follows. Binds the lower part of the 30S subunit head. Binds mRNA in the 70S ribosome, positioning it for translation. This chain is Small ribosomal subunit protein uS3, found in Mycobacterium avium (strain 104).